Reading from the N-terminus, the 461-residue chain is L-seryl-tRNA(Sec) selenium transferase (461 aa).

N6-(pyridoxal phosphate)lysine is present on Lys-294.

It belongs to the SelA family. The cofactor is pyridoxal 5'-phosphate.

The protein localises to the cytoplasm. The catalysed reaction is L-seryl-tRNA(Sec) + selenophosphate + H(+) = L-selenocysteinyl-tRNA(Sec) + phosphate. It participates in aminoacyl-tRNA biosynthesis; selenocysteinyl-tRNA(Sec) biosynthesis; selenocysteinyl-tRNA(Sec) from L-seryl-tRNA(Sec) (bacterial route): step 1/1. Functionally, converts seryl-tRNA(Sec) to selenocysteinyl-tRNA(Sec) required for selenoprotein biosynthesis. This Haemophilus influenzae (strain PittEE) protein is L-seryl-tRNA(Sec) selenium transferase.